A 293-amino-acid chain; its full sequence is Acetyl-coenzyme A carboxylase carboxyl transferase subunit beta (293 aa).

Positions 29–293 constitute a CoA carboxyltransferase N-terminal domain; it reads LWVKCSECSQ…GVKELAEANI (265 aa). 4 residues coordinate Zn(2+): cysteine 33, cysteine 36, cysteine 52, and cysteine 55. The segment at 33 to 55 adopts a C4-type zinc-finger fold; sequence CSECSQVAYRKDLISNFNVCSNC.

Belongs to the AccD/PCCB family. Acetyl-CoA carboxylase is a heterohexamer composed of biotin carboxyl carrier protein (AccB), biotin carboxylase (AccC) and two subunits each of ACCase subunit alpha (AccA) and ACCase subunit beta (AccD). Zn(2+) serves as cofactor.

The protein resides in the cytoplasm. The catalysed reaction is N(6)-carboxybiotinyl-L-lysyl-[protein] + acetyl-CoA = N(6)-biotinyl-L-lysyl-[protein] + malonyl-CoA. It functions in the pathway lipid metabolism; malonyl-CoA biosynthesis; malonyl-CoA from acetyl-CoA: step 1/1. In terms of biological role, component of the acetyl coenzyme A carboxylase (ACC) complex. Biotin carboxylase (BC) catalyzes the carboxylation of biotin on its carrier protein (BCCP) and then the CO(2) group is transferred by the transcarboxylase to acetyl-CoA to form malonyl-CoA. This chain is Acetyl-coenzyme A carboxylase carboxyl transferase subunit beta, found in Prochlorococcus marinus (strain MIT 9312).